A 319-amino-acid chain; its full sequence is ATP-dependent 6-phosphofructokinase (319 aa).

ATP is bound at residue Gly11. Position 21–25 (21–25 (RAVVR)) interacts with ADP. Residues 72 to 73 (RC) and 102 to 105 (GDGS) contribute to the ATP site. Position 103 (Asp103) interacts with Mg(2+). 125 to 127 (TID) provides a ligand contact to substrate. Asp127 acts as the Proton acceptor in catalysis. Arg154 contributes to the ADP binding site. Substrate contacts are provided by residues Arg162 and 169–171 (MGR). ADP contacts are provided by residues 185-187 (GAE), Arg211, and 213-215 (KLH). Residues Glu222, Arg243, and 249 to 252 (HIQR) contribute to the substrate site.

It belongs to the phosphofructokinase type A (PFKA) family. ATP-dependent PFK group I subfamily. Prokaryotic clade 'B1' sub-subfamily. In terms of assembly, homotetramer. It depends on Mg(2+) as a cofactor.

The protein localises to the cytoplasm. It carries out the reaction beta-D-fructose 6-phosphate + ATP = beta-D-fructose 1,6-bisphosphate + ADP + H(+). It participates in carbohydrate degradation; glycolysis; D-glyceraldehyde 3-phosphate and glycerone phosphate from D-glucose: step 3/4. Allosterically activated by ADP and other diphosphonucleosides, and allosterically inhibited by phosphoenolpyruvate. Catalyzes the phosphorylation of D-fructose 6-phosphate to fructose 1,6-bisphosphate by ATP, the first committing step of glycolysis. The sequence is that of ATP-dependent 6-phosphofructokinase from Alkaliphilus metalliredigens (strain QYMF).